Consider the following 384-residue polypeptide: Mannitol-1-phosphate 5-dehydrogenase (384 aa).

5 to 16 provides a ligand contact to NAD(+); it reads AVHFGAGNIGRG.

It belongs to the mannitol dehydrogenase family.

The catalysed reaction is D-mannitol 1-phosphate + NAD(+) = beta-D-fructose 6-phosphate + NADH + H(+). The polypeptide is Mannitol-1-phosphate 5-dehydrogenase (Vibrio cholerae serotype O1 (strain ATCC 39541 / Classical Ogawa 395 / O395)).